The following is a 322-amino-acid chain: TATA box-binding protein-associated factor RNA polymerase I subunit D (322 aa).

Disordered regions lie at residues 1–70 and 82–116; these read MAQS…SIEP and FKKK…RITR. At Ser23 the chain carries Phosphoserine. Basic residues predominate over residues 82–107; it reads FKKKKRKKRKKRKYEPKLRPRGRPRG. Residue Ser137 is modified to Phosphoserine. Positions 198-219 are disordered; the sequence is YMDDDGSLSPIEEPLTEDEATN. At Ser232 the chain carries Phosphoserine. A compositionally biased stretch (basic and acidic residues) spans 257–267; it reads FSKKAKDATHR. A disordered region spans residues 257 to 276; that stretch reads FSKKAKDATHREKGHRRTLK.

In terms of assembly, component of the transcription factor SL1/TIF-IB complex, composed of TBP and at least TAF1A, TAF1B, TAF1C and TAF1D. Interacts with UBTF.

The protein resides in the nucleus. Its function is as follows. Component of the transcription factor SL1/TIF-IB complex, which is involved in the assembly of the PIC (preinitiation complex) during RNA polymerase I-dependent transcription. The rate of PIC formation probably is primarily dependent on the rate of association of SL1/TIF-IB with the rDNA promoter. SL1/TIF-IB is involved in stabilization of nucleolar transcription factor 1/UBTF on rDNA. Formation of SL1/TIF-IB excludes the association of TBP with TFIID subunits. The sequence is that of TATA box-binding protein-associated factor RNA polymerase I subunit D (Taf1d) from Mus musculus (Mouse).